A 126-amino-acid polypeptide reads, in one-letter code: Non-specific lipid-transfer protein 15 (126 aa).

The first 22 residues, 1–22 (MSKSIFVVCITLLVVLSPTLNA), serve as a signal peptide directing secretion. 4 cysteine pairs are disulfide-bonded: Cys34–Cys80, Cys45–Cys57, Cys58–Cys100, and Cys78–Cys114.

The protein belongs to the plant LTP family.

In terms of biological role, plant non-specific lipid-transfer proteins transfer phospholipids as well as galactolipids across membranes. May play a role in wax or cutin deposition in the cell walls of expanding epidermal cells and certain secretory tissues. This is Non-specific lipid-transfer protein 15 (LTP15) from Arabidopsis thaliana (Mouse-ear cress).